Reading from the N-terminus, the 207-residue chain is Recombination protein RecR (207 aa).

The segment at 60 to 75 adopts a C4-type zinc-finger fold; that stretch reads CRRCHNISDSGVCTIC. The region spanning 83 to 178 is the Toprim domain; it reads STLCVVENIR…RVSVIARGIA (96 aa).

The protein belongs to the RecR family.

In terms of biological role, may play a role in DNA repair. It seems to be involved in an RecBC-independent recombinational process of DNA repair. It may act with RecF and RecO. The protein is Recombination protein RecR of Porphyromonas gingivalis (strain ATCC 33277 / DSM 20709 / CIP 103683 / JCM 12257 / NCTC 11834 / 2561).